The primary structure comprises 520 residues: MFAQPYDHSFNDLFNQYVNMETSAVDGKDSALSDFDQLFPLDSLSSDCGDLPPTVSTPKRHQSPQPWSNEWSLQDDGAAADHFAFHDTVHPSAISDVNLNNFEVPSRPTASHGLSTSPSTPPATPRRKPTQSALITPKSIRHRSPNERRSHLRKQSFSPSLMRSSNLSKARMAYPEAWAQRLQNFSLHGSEDRLPLSPPPSDVLIQHENMPTEQIMNQHGDSAERPSQYDARLYQQSPSVSMPSPSIAMSARQQQHYIAQPSSSSLTNSSPSSADDIFSSSHSSDPHSLSSWQSDPLHASSLSFTPDLQGQDSQWWSPMPSRVAQQQAAYLTSPTPVRTMQSVGSQNDMMQGGLMIQFNPSYDMSADHSFSSSNMLPATPQKFDTSFNTSQVHNVSRSPSLSPKAGTSPRDTRNGSISKPTHRRTHSRKLSGQSMNAPKPAKASGSSSRGSNKSVSVSFVNFTAHDSKKILTGVAPSGSSKTKARREQEARDRRRKLSEAALRAVRSAGGDVEALEAVLC.

Disordered regions lie at residues 49 to 72 (GDLP…NEWS), 104 to 165 (VPSR…MRSS), 236 to 295 (QSPS…WQSD), 367 to 453 (DHSF…GSNK), and 471 to 496 (LTGV…RRRK). Composition is skewed to polar residues over residues 63–72 (SPQPWSNEWS), 104–114 (VPSRPTASHGL), and 155–165 (QSFSPSLMRSS). Residues 237–251 (SPSVSMPSPSIAMSA) show a composition bias toward low complexity. Over residues 252–261 (RQQQHYIAQP) the composition is skewed to polar residues. A compositionally biased stretch (low complexity) spans 262 to 295 (SSSSLTNSSPSSADDIFSSSHSSDPHSLSSWQSD). Over residues 367–401 (DHSFSSSNMLPATPQKFDTSFNTSQVHNVSRSPSL) the composition is skewed to polar residues. A compositionally biased stretch (basic residues) spans 420-429 (PTHRRTHSRK). Low complexity predominate over residues 436–453 (NAPKPAKASGSSSRGSNK).

The protein belongs to the wetA family.

Its function is as follows. BrlA, abaA and wetA are pivotal regulators of conidiophore development and conidium maturation. They act individually and together to regulate their own expression and that of numerous other sporulation-specific genes. Responsible for activating a set of genes whose products make up the final two conidial wall layers or direct their assembly and though this activity is responsible for acquisition of spore dormancy. The polypeptide is Developmental regulatory protein wetA (Penicillium rubens (strain ATCC 28089 / DSM 1075 / NRRL 1951 / Wisconsin 54-1255) (Penicillium chrysogenum)).